The following is a 348-amino-acid chain: Anthranilate phosphoribosyltransferase (348 aa).

5-phospho-alpha-D-ribose 1-diphosphate-binding positions include glycine 81, 84-85, 91-94, 109-117, and serine 121; these read GD, NVST, and KHGNRAVSG. Glycine 81 lines the anthranilate pocket. Residue serine 93 coordinates Mg(2+). Residue asparagine 112 coordinates anthranilate. Arginine 167 is a binding site for anthranilate. Aspartate 226 and glutamate 227 together coordinate Mg(2+).

The protein belongs to the anthranilate phosphoribosyltransferase family. Homodimer. Mg(2+) is required as a cofactor.

It catalyses the reaction N-(5-phospho-beta-D-ribosyl)anthranilate + diphosphate = 5-phospho-alpha-D-ribose 1-diphosphate + anthranilate. Its pathway is amino-acid biosynthesis; L-tryptophan biosynthesis; L-tryptophan from chorismate: step 2/5. Its function is as follows. Catalyzes the transfer of the phosphoribosyl group of 5-phosphorylribose-1-pyrophosphate (PRPP) to anthranilate to yield N-(5'-phosphoribosyl)-anthranilate (PRA). The chain is Anthranilate phosphoribosyltransferase from Ectopseudomonas mendocina (strain ymp) (Pseudomonas mendocina).